A 72-amino-acid polypeptide reads, in one-letter code: Translation initiation factor IF-1 (72 aa).

In terms of domain architecture, S1-like spans 1–72 (MSKEDVIEVE…SRGRIVYRFK (72 aa)).

The protein belongs to the IF-1 family. In terms of assembly, component of the 30S ribosomal translation pre-initiation complex which assembles on the 30S ribosome in the order IF-2 and IF-3, IF-1 and N-formylmethionyl-tRNA(fMet); mRNA recruitment can occur at any time during PIC assembly.

It localises to the cytoplasm. Functionally, one of the essential components for the initiation of protein synthesis. Stabilizes the binding of IF-2 and IF-3 on the 30S subunit to which N-formylmethionyl-tRNA(fMet) subsequently binds. Helps modulate mRNA selection, yielding the 30S pre-initiation complex (PIC). Upon addition of the 50S ribosomal subunit IF-1, IF-2 and IF-3 are released leaving the mature 70S translation initiation complex. The polypeptide is Translation initiation factor IF-1 (Desulfitobacterium hafniense (strain Y51)).